We begin with the raw amino-acid sequence, 198 residues long: Ribonuclease HII (198 aa).

The RNase H type-2 domain maps to 10–198; it reads QLVAGVDEVG…PVKRALGLAS (189 aa). Residues aspartate 16, glutamate 17, and aspartate 108 each contribute to the a divalent metal cation site.

This sequence belongs to the RNase HII family. The cofactor is Mn(2+). It depends on Mg(2+) as a cofactor.

The protein resides in the cytoplasm. It carries out the reaction Endonucleolytic cleavage to 5'-phosphomonoester.. Endonuclease that specifically degrades the RNA of RNA-DNA hybrids. In Citrobacter koseri (strain ATCC BAA-895 / CDC 4225-83 / SGSC4696), this protein is Ribonuclease HII.